Here is a 259-residue protein sequence, read N- to C-terminus: Thiazole synthase (259 aa).

The active-site Schiff-base intermediate with DXP is the lysine 102. 1-deoxy-D-xylulose 5-phosphate is bound by residues glycine 163, alanine 189–glycine 190, and asparagine 211–threonine 212.

Belongs to the ThiG family. As to quaternary structure, homotetramer. Forms heterodimers with either ThiH or ThiS.

It localises to the cytoplasm. The enzyme catalyses [ThiS sulfur-carrier protein]-C-terminal-Gly-aminoethanethioate + 2-iminoacetate + 1-deoxy-D-xylulose 5-phosphate = [ThiS sulfur-carrier protein]-C-terminal Gly-Gly + 2-[(2R,5Z)-2-carboxy-4-methylthiazol-5(2H)-ylidene]ethyl phosphate + 2 H2O + H(+). Its pathway is cofactor biosynthesis; thiamine diphosphate biosynthesis. Functionally, catalyzes the rearrangement of 1-deoxy-D-xylulose 5-phosphate (DXP) to produce the thiazole phosphate moiety of thiamine. Sulfur is provided by the thiocarboxylate moiety of the carrier protein ThiS. In vitro, sulfur can be provided by H(2)S. This chain is Thiazole synthase, found in Novosphingobium aromaticivorans (strain ATCC 700278 / DSM 12444 / CCUG 56034 / CIP 105152 / NBRC 16084 / F199).